A 464-amino-acid polypeptide reads, in one-letter code: Fumarate hydratase class II 1 (464 aa).

Substrate-binding positions include 96-98 (SGT), 127-130 (HPND), 137-139 (SSN), and Thr185. His186 (proton donor/acceptor) is an active-site residue. Ser316 is a catalytic residue. Residues Ser317 and 322 to 324 (KVN) contribute to the substrate site.

Belongs to the class-II fumarase/aspartase family. Fumarase subfamily. In terms of assembly, homotetramer.

The protein resides in the cytoplasm. It carries out the reaction (S)-malate = fumarate + H2O. Its pathway is carbohydrate metabolism; tricarboxylic acid cycle; (S)-malate from fumarate: step 1/1. Functionally, involved in the TCA cycle. Catalyzes the stereospecific interconversion of fumarate to L-malate. The chain is Fumarate hydratase class II 1 from Pseudomonas aeruginosa (strain ATCC 15692 / DSM 22644 / CIP 104116 / JCM 14847 / LMG 12228 / 1C / PRS 101 / PAO1).